The following is a 31-amino-acid chain: Cytochrome b6-f complex subunit 6 (31 aa).

Residues 4 to 26 (LTSYFGFLLAALTITSALFIGLS) form a helical membrane-spanning segment.

This sequence belongs to the PetL family. In terms of assembly, the 4 large subunits of the cytochrome b6-f complex are cytochrome b6, subunit IV (17 kDa polypeptide, PetD), cytochrome f and the Rieske protein, while the 4 small subunits are PetG, PetL, PetM and PetN. The complex functions as a dimer.

Its subcellular location is the plastid. The protein resides in the chloroplast thylakoid membrane. In terms of biological role, component of the cytochrome b6-f complex, which mediates electron transfer between photosystem II (PSII) and photosystem I (PSI), cyclic electron flow around PSI, and state transitions. PetL is important for photoautotrophic growth as well as for electron transfer efficiency and stability of the cytochrome b6-f complex. This chain is Cytochrome b6-f complex subunit 6, found in Aethionema grandiflorum (Persian stone-cress).